Here is a 307-residue protein sequence, read N- to C-terminus: Methionyl-tRNA formyltransferase (307 aa).

109-112 (SLLP) contributes to the (6S)-5,6,7,8-tetrahydrofolate binding site.

This sequence belongs to the Fmt family.

The enzyme catalyses L-methionyl-tRNA(fMet) + (6R)-10-formyltetrahydrofolate = N-formyl-L-methionyl-tRNA(fMet) + (6S)-5,6,7,8-tetrahydrofolate + H(+). Its function is as follows. Attaches a formyl group to the free amino group of methionyl-tRNA(fMet). The formyl group appears to play a dual role in the initiator identity of N-formylmethionyl-tRNA by promoting its recognition by IF2 and preventing the misappropriation of this tRNA by the elongation apparatus. The polypeptide is Methionyl-tRNA formyltransferase (Mycobacteroides abscessus (strain ATCC 19977 / DSM 44196 / CCUG 20993 / CIP 104536 / JCM 13569 / NCTC 13031 / TMC 1543 / L948) (Mycobacterium abscessus)).